A 727-amino-acid chain; its full sequence is DNA topoisomerase 3 (727 aa).

The Toprim domain occupies 3–136; the sequence is KTVVLAEKPS…LKRLWISSVT (134 aa). The Mg(2+) site is built by glutamate 9 and aspartate 105. Residues 153–592 enclose the Topo IA-type catalytic domain; sequence FENLYHSAVA…EMKEYAKQTI (440 aa). Positions 187-192 are interaction with DNA; it reads SCGRVQ. The O-(5'-phospho-DNA)-tyrosine intermediate role is filled by tyrosine 310. Residues 685–711 are compositionally biased toward basic and acidic residues; the sequence is RRAKDKNSKASKRDVHSYMKKQNKDEP. A disordered region spans residues 685–713; it reads RRAKDKNSKASKRDVHSYMKKQNKDEPIN.

It belongs to the type IA topoisomerase family. It depends on Mg(2+) as a cofactor.

The enzyme catalyses ATP-independent breakage of single-stranded DNA, followed by passage and rejoining.. In terms of biological role, releases the supercoiling and torsional tension of DNA, which is introduced during the DNA replication and transcription, by transiently cleaving and rejoining one strand of the DNA duplex. Introduces a single-strand break via transesterification at a target site in duplex DNA. The scissile phosphodiester is attacked by the catalytic tyrosine of the enzyme, resulting in the formation of a DNA-(5'-phosphotyrosyl)-enzyme intermediate and the expulsion of a 3'-OH DNA strand. The free DNA strand then undergoes passage around the unbroken strand, thus removing DNA supercoils. Finally, in the religation step, the DNA 3'-OH attacks the covalent intermediate to expel the active-site tyrosine and restore the DNA phosphodiester backbone. This is DNA topoisomerase 3 from Bacillus licheniformis (strain ATCC 14580 / DSM 13 / JCM 2505 / CCUG 7422 / NBRC 12200 / NCIMB 9375 / NCTC 10341 / NRRL NRS-1264 / Gibson 46).